Reading from the N-terminus, the 1151-residue chain is SCF E3 ubiquitin ligase complex F-box protein GRR1 (1151 aa).

A compositionally biased stretch (basic and acidic residues) spans 1-18; it reads MDQDNNNHNDSNRLHPPD. The tract at residues 1–72 is disordered; sequence MDQDNNNHND…ATSERNASEV (72 aa). The span at 38-49 shows a compositional bias: low complexity; the sequence is NNNNNNNNNNNN. Positions 58 to 72 are enriched in basic and acidic residues; the sequence is RTRETATSERNASEV. Residues Ser199 and Ser300 each carry the phosphoserine modification. The 48-residue stretch at 314 to 361 folds into the F-box domain; the sequence is VFALNMLPSEILHLILDKLNQKYDIVKFLTVSKLWAEIIVKILYYRPH. LRR repeat units lie at residues 399–423, 424–449, 450–475, 476–501, 502–527, 528–553, 554–582, 583–608, 609–634, 635–660, 661–685, 686–714, and 715–740; these read GDYMHDTELNYFVGCKNLERLTLVF, CKHITSVPISAVLRGCKFLQSVDITG, IRDVSDDVFDTLATYCPRVQGFYVPQ, ARNVTFDSLRNFIVHSPMLKRIKITA, NNNMNDELVELLANKCPLLVEVDITL, SPNVTDSSLLKLLTRLVQLREFRITH, NTNITDNLFQELSKVVDDMPSLRLIDLSG, CENITDKTIESIVNLAPKLRNVFLGK, CSRITDASLFQLSKLGKNLQTVHFGH, CFNITDNGVRALFHSCTRIQYVDFAC, CTNLTNRTLYELADLPKLKRIGLVK, CTQMTDEGLLNMVSLRGRNDTLERVHLSY, and CSNLTIYPIYELLMSCPRLSHLSLTA. Positions 1066–1080 are enriched in low complexity; the sequence is AGANDTSNNETNNGN. Disordered stretches follow at residues 1066–1090 and 1118–1151; these read AGANDTSNNETNNGNDDNETENPNF and VRNNNNNTIDESMPDTAIDSQMDEASGTPDEDML.

Interacts with SKP1. Component of the probable SCF(GRR1) complex containing CDC53, SKP1, RBX1 and GRR1.

It localises to the membrane. Its pathway is protein modification; protein ubiquitination. Substrate recognition component of a SCF (SKP1-CUL1-F-box protein) E3 ubiquitin-protein ligase complex which mediates the ubiquitination and subsequent proteasomal degradation of target proteins. Recognizes and directs ubiquitination of phosphorylated CLN1, CLN2 and GIC2. Probably constitutes the primary response element required for the generation or interpretation of the signal that induces glucose repression. This chain is SCF E3 ubiquitin ligase complex F-box protein GRR1 (GRR1), found in Saccharomyces cerevisiae (strain ATCC 204508 / S288c) (Baker's yeast).